The sequence spans 234 residues: Probable transcriptional regulatory protein TcrX (234 aa).

Residues 10 to 124 form the Response regulatory domain; that stretch reads TVLVVDDEPV…EVVLRLRALL (115 aa). Asp-59 carries the 4-aspartylphosphate modification. A DNA-binding region (ompR/PhoB-type) is located at residues 135–232; it reads GAQLVVGDLV…LRGAGYVLKP (98 aa).

Post-translationally, phosphorylated by TcrY.

It is found in the cytoplasm. Its function is as follows. Member of the two-component regulatory system TcrY/TcrX. This chain is Probable transcriptional regulatory protein TcrX (tcrX), found in Mycobacterium tuberculosis (strain ATCC 25618 / H37Rv).